We begin with the raw amino-acid sequence, 309 residues long: Homoserine kinase (309 aa).

Position 95 to 105 (95 to 105 (PQSRGLGSSAA)) interacts with ATP.

This sequence belongs to the GHMP kinase family. Homoserine kinase subfamily.

The protein localises to the cytoplasm. It carries out the reaction L-homoserine + ATP = O-phospho-L-homoserine + ADP + H(+). The protein operates within amino-acid biosynthesis; L-threonine biosynthesis; L-threonine from L-aspartate: step 4/5. Its function is as follows. Catalyzes the ATP-dependent phosphorylation of L-homoserine to L-homoserine phosphate. The chain is Homoserine kinase from Corynebacterium efficiens (strain DSM 44549 / YS-314 / AJ 12310 / JCM 11189 / NBRC 100395).